The chain runs to 733 residues: MATKFPKFSQALAQDPATRRIWYGIATAHDLEAHDGMTEENLYQKIFASHFGHLAVIFLWTAGNLFHVAWQGNFEKWVSNPLKVKPIAHAIWDPHFGESAIKAFSKGNTYPVNIAFSGVYQWWYTIGFRTNQELYLGSVGLLILASVLLFAGWLHLQPKFRPSLAWFKNNESRLNHHLSGLLGVSSLAWTGHIVHVAIPASRGVHVGWENFLTTPPHPAGLTPFYSGDWTVYAANPDSANHVYGTAEGAGTAILTFLGGFHPQTQSLWLSDIAHHQLAIAVVFIVAGHMYRTNFGIGHNMKEILDAHRPPGGRLGAGHTGLFETITNSLHMQLGLALACLGVATSLTAQHMYAITPYAFLSKDFTTEAALYTHHQYIAGFLMVGAFAHGAIFFVRDYDPELNKNNVLARMLEHKEAIISHLSWASLFLGFHTLGLYIHNDTVVAFGQPEKQILFEPLFAEYIQAASGKAVYEFNTLLSSSTSPATVAGNQIWLPGWLEAINNNKNDLFLKIGPGDFLVHHAIALGLHTTTLILVKGALDARGSKLMPDKKDFGYSFPCDGPGRGGTCDISAWDAFYLAMFWMLNTIGWVTFYWHWKHMTIWGGNPGQFDESSNYIMGWLRDYLWLNSSPLINGYNPFGMNNLSVWAWMFLFGHLIWATGFMFLISWRGYWQELIETLVWAHERTPLANLVRWRDKPVALSIVQARLVGLVHFTVGYVLTYAAFVIASTAGKYG.

The next 8 membrane-spanning stretches (helical) occupy residues 46 to 69, 134 to 157, 174 to 198, 272 to 290, 329 to 352, 368 to 394, 416 to 438, and 516 to 534; these read IFASHFGHLAVIFLWTAGNLFHVA, LYLGSVGLLILASVLLFAGWLHLQ, LNHHLSGLLGVSSLAWTGHIVHVAI, IAHHQLAIAVVFIVAGHMY, LHMQLGLALACLGVATSLTAQHMY, AALYTHHQYIAGFLMVGAFAHGAIFFV, AIISHLSWASLFLGFHTLGLYIH, and FLVHHAIALGLHTTTLILV. [4Fe-4S] cluster contacts are provided by cysteine 558 and cysteine 567. Helical transmembrane passes span 574–595 and 642–664; these read AFYLAMFWMLNTIGWVTFYWHW and LSVWAWMFLFGHLIWATGFMFLI. Chlorophyll a contacts are provided by histidine 653, methionine 661, and tyrosine 669. Residue tryptophan 670 participates in phylloquinone binding. Residues 706–726 form a helical membrane-spanning segment; sequence LVGLVHFTVGYVLTYAAFVIA.

The protein belongs to the PsaA/PsaB family. As to quaternary structure, the PsaA/B heterodimer binds the P700 chlorophyll special pair and subsequent electron acceptors. PSI consists of a core antenna complex that captures photons, and an electron transfer chain that converts photonic excitation into a charge separation. The eukaryotic PSI reaction center is composed of at least 11 subunits. It depends on P700 is a chlorophyll a/chlorophyll a' dimer, A0 is one or more chlorophyll a, A1 is one or both phylloquinones and FX is a shared 4Fe-4S iron-sulfur center. as a cofactor.

Its subcellular location is the plastid. It localises to the chloroplast thylakoid membrane. It catalyses the reaction reduced [plastocyanin] + hnu + oxidized [2Fe-2S]-[ferredoxin] = oxidized [plastocyanin] + reduced [2Fe-2S]-[ferredoxin]. Functionally, psaA and PsaB bind P700, the primary electron donor of photosystem I (PSI), as well as the electron acceptors A0, A1 and FX. PSI is a plastocyanin/cytochrome c6-ferredoxin oxidoreductase, converting photonic excitation into a charge separation, which transfers an electron from the donor P700 chlorophyll pair to the spectroscopically characterized acceptors A0, A1, FX, FA and FB in turn. Oxidized P700 is reduced on the lumenal side of the thylakoid membrane by plastocyanin or cytochrome c6. In Phaeodactylum tricornutum (strain CCAP 1055/1), this protein is Photosystem I P700 chlorophyll a apoprotein A2.